Consider the following 657-residue polypeptide: MTFQLHAPFAPCGDQPEAIARLSAGVRNQVKSQVLLGTTGSGKTFTIANVVANVNLPTLVLAHNKTLAAQLYQEFREFFPNNAVEYFISYYDYYQPEAYIARSDTYIEKSLLINDEIDKLRLSATRSILERRDTLIVSSVSCIYGIGSPENYTSMALVLEVGKEYPRNILTAQLVKMHYQASPIPQRSAFRERGSVIDIFPAYESELALRLEFLNDTLTSIEYSDPLTMIPKESVPSATLYPGSHYVIPEAIREQAIRTIQEELEERMAFFDDRPIEKDRIFHRTTHDIEMIKEIGFCKGIENYSRHFTGAPPGAPPTCLLDYFPEDFLLIIDESHQTLPQIRAMYRGDQSRKQSLVEYGFRLPSAFDNRPLTYEEAQKYFRKVIYVSATPGDTEVQESSGHIVQQIIRPTGIPDPMPEIRPATGQVDDLLEEIRLRLSQKHEKILVISITKKLAEDMAGFLSELEIPAAYLHSGIETAERTQILTDLRSGVIDVLIGVNLLREGLDLPEVSLVAILDADKEGFLRSTSSLIQFCGRAARNINGKVIFYADQKTRSIEETLRETERRRQIQLDYNKEHNIVPKPIIKAIFANPILQTSKDSESPKESQRPLSKEDLEEQIKKYEALMQRAAKEFRFNEAAKYRDAMQACKEQLLYLF.

The Helicase ATP-binding domain maps to 24 to 409; it reads AGVRNQVKSQ…SGHIVQQIIR (386 aa). Position 37–44 (37–44) interacts with ATP; the sequence is GTTGSGKT. The short motif at 90–113 is the Beta-hairpin element; sequence YYDYYQPEAYIARSDTYIEKSLLI. Positions 426–589 constitute a Helicase C-terminal domain; it reads QVDDLLEEIR…IVPKPIIKAI (164 aa). The UVR domain maps to 617–652; it reads EEQIKKYEALMQRAAKEFRFNEAAKYRDAMQACKEQ.

The protein belongs to the UvrB family. Forms a heterotetramer with UvrA during the search for lesions. Interacts with UvrC in an incision complex.

The protein resides in the cytoplasm. Functionally, the UvrABC repair system catalyzes the recognition and processing of DNA lesions. A damage recognition complex composed of 2 UvrA and 2 UvrB subunits scans DNA for abnormalities. Upon binding of the UvrA(2)B(2) complex to a putative damaged site, the DNA wraps around one UvrB monomer. DNA wrap is dependent on ATP binding by UvrB and probably causes local melting of the DNA helix, facilitating insertion of UvrB beta-hairpin between the DNA strands. Then UvrB probes one DNA strand for the presence of a lesion. If a lesion is found the UvrA subunits dissociate and the UvrB-DNA preincision complex is formed. This complex is subsequently bound by UvrC and the second UvrB is released. If no lesion is found, the DNA wraps around the other UvrB subunit that will check the other stand for damage. This is UvrABC system protein B from Chlamydia pneumoniae (Chlamydophila pneumoniae).